An 82-amino-acid chain; its full sequence is Small ribosomal subunit protein bS16 (82 aa).

This sequence belongs to the bacterial ribosomal protein bS16 family.

In Shigella boydii serotype 18 (strain CDC 3083-94 / BS512), this protein is Small ribosomal subunit protein bS16.